We begin with the raw amino-acid sequence, 692 residues long: Junctophilin-2 (692 aa).

At 1–670 (MSGGRFDFDD…EVEVEEVPNT (670 aa)) the chain is on the cytoplasmic side. 6 MORN repeats span residues 14-36 (YCGGWEGGKAHGHGLCTGPKGQG), 38-59 (YSGSWNFGFEVAGVYTWPSGNT), 60-79 (FEGYWSQGKRHGLGIETKGR), 82-104 (YKGEWTHGFKGRYGIRQSTNSGA), 106-128 (YEGTWNNGLQDGYGTETYADGGT), and 129-151 (YQGQFTNGMRHGYGVRQSVPYGM). A phosphoserine mark is found at S162 and S165. 2 disordered regions span residues 164-190 (SSLRSEHSNGTVAPDSPAADGPTLPLP) and 246-273 (LSSGASDAASTGSLAEGAEGPDDAAAPF). 2 MORN repeats span residues 285–307 (YMGEWKNDKRSGFGVSERSSGLR) and 308–330 (YEGEWLDNLRHGYGRTTLPDGHR). The short motif at 345-359 (KRRVLPLKSNKVRQK) is the Bipartite nuclear localization signal element. The segment at 439 to 661 (NSESLLEPRE…KEVAQEAEAE (223 aa)) is disordered. Phosphoserine occurs at positions 440, 442, and 462. Residues 457 to 471 (ERPRESPQLHERETP) show a composition bias toward basic and acidic residues. Position 470 is a phosphothreonine (T470). The segment covering 474–487 (EGGPPSPAGTPPQP) has biased composition (pro residues). Phosphoserine is present on S479. T483 is modified (phosphothreonine). The Nuclear localization signal signature appears at 488–492 (KRPRP). Phosphoserine occurs at positions 527 and 533. The segment covering 573-582 (PLEDEPEPEP) has biased composition (acidic residues). 4 positions are modified to phosphoserine: S589, S593, S604, and S609. The span at 627–640 (AEPKAKARKTEARG) shows a compositional bias: basic and acidic residues. A helical; Anchor for type IV membrane protein membrane pass occupies residues 671-691 (VLICMVILLNIGLAILFVHLL).

This sequence belongs to the junctophilin family. In terms of assembly, interacts with TRPC3. Interacts with BAG5 and HSPA8; the interaction with HSPA8 is increased in the presence of BAG5. Junctophilin-2 N-terminal fragment: Interacts with MEF2C. Post-translationally, proteolytically cleaved by calpain in response to cardiac stress. The major cleavage site takes place at the C-terminus and leads to the release of the Junctophilin-2 N-terminal fragment chain (JP2NT). Phosphorylation on Ser-165, probably by PKC, affects RYR1-mediated calcium ion release, interaction with TRPC3, and skeletal muscle myotubule development.

It localises to the cell membrane. The protein resides in the sarcoplasmic reticulum membrane. It is found in the endoplasmic reticulum membrane. Its subcellular location is the nucleus. In terms of biological role, membrane-binding protein that provides a structural bridge between the plasma membrane and the sarcoplasmic reticulum and is required for normal excitation-contraction coupling in cardiomyocytes. Provides a structural foundation for functional cross-talk between the cell surface and intracellular Ca(2+) release channels by maintaining the 12-15 nm gap between the sarcolemma and the sarcoplasmic reticulum membranes in the cardiac dyads. Necessary for proper intracellular Ca(2+) signaling in cardiac myocytes via its involvement in ryanodine receptor-mediated calcium ion release. Contributes to the construction of skeletal muscle triad junctions. Functionally, transcription repressor required to safeguard against the deleterious effects of cardiac stress. Generated following cleavage of the Junctophilin-2 chain by calpain in response to cardiac stress in cardiomyocytes. Following cleavage and release from the membrane, translocates to the nucleus, binds DNA and represses expression of genes implicated in cell growth and differentiation, hypertrophy, inflammation and fibrosis. Modifies the transcription profile and thereby attenuates pathological remodeling in response to cardiac stress. Probably acts by competing with MEF2 transcription factors and TATA-binding proteins. The chain is Junctophilin-2 from Rattus norvegicus (Rat).